A 491-amino-acid polypeptide reads, in one-letter code: Ketol-acid reductoisomerase (NADP(+)) (491 aa).

The region spanning 15–208 (AQLGKCRFMG…GGHRAGVLES (194 aa)) is the KARI N-terminal Rossmann domain. Residues 45–48 (CGAQ), Arg68, Arg76, Ser78, and 108–110 (DKQ) each bind NADP(+). His132 is an active-site residue. Residue Gly158 coordinates NADP(+). KARI C-terminal knotted domains lie at 209 to 344 (SFVA…TAPQ) and 345 to 484 (YEGK…MTDM). Mg(2+) is bound by residues Asp217, Glu221, Glu389, and Glu393. Ser414 contributes to the substrate binding site.

This sequence belongs to the ketol-acid reductoisomerase family. Requires Mg(2+) as cofactor.

The catalysed reaction is (2R)-2,3-dihydroxy-3-methylbutanoate + NADP(+) = (2S)-2-acetolactate + NADPH + H(+). It catalyses the reaction (2R,3R)-2,3-dihydroxy-3-methylpentanoate + NADP(+) = (S)-2-ethyl-2-hydroxy-3-oxobutanoate + NADPH + H(+). It functions in the pathway amino-acid biosynthesis; L-isoleucine biosynthesis; L-isoleucine from 2-oxobutanoate: step 2/4. It participates in amino-acid biosynthesis; L-valine biosynthesis; L-valine from pyruvate: step 2/4. Functionally, involved in the biosynthesis of branched-chain amino acids (BCAA). Catalyzes an alkyl-migration followed by a ketol-acid reduction of (S)-2-acetolactate (S2AL) to yield (R)-2,3-dihydroxy-isovalerate. In the isomerase reaction, S2AL is rearranged via a Mg-dependent methyl migration to produce 3-hydroxy-3-methyl-2-ketobutyrate (HMKB). In the reductase reaction, this 2-ketoacid undergoes a metal-dependent reduction by NADPH to yield (R)-2,3-dihydroxy-isovalerate. The chain is Ketol-acid reductoisomerase (NADP(+)) from Salmonella typhimurium (strain LT2 / SGSC1412 / ATCC 700720).